A 336-amino-acid chain; its full sequence is MIEADRLISATGVREDEIIDRAIRPKMLADYTGQDPVCEQMEIFIEAARQRGEALDHLLIFGPPGLGKTTLANIVANEMGVNIKTTSGPVLEKAGDLAALLTNLEPNDVLFIDEIHRLSPVVEEVLYPAMEDYQLDIMIGEGPAARSIKLDLPPFTLIGATTRAGSLTSPLRDRFGIVQRLEFYNVKDLTDIVSRSARCLGLEMTGDGALELARRSRGTPRIANRLLRRVRDFAQVKSDGRIDGPIAARAMDMLDVDNEGFDFMDRKLLLAVIDKFMGGPVGLDNLAAAIGEEKDTIEDVLEPYLIQQGYLQRTPRGRMATPRAYAHFGLQRPDER.

Residues 4–184 (ADRLISATGV…FGIVQRLEFY (181 aa)) form a large ATPase domain (RuvB-L) region. ATP contacts are provided by residues I23, R24, G65, K68, T69, T70, 131 to 133 (EDY), R174, Y184, and R221. Residue T69 participates in Mg(2+) binding. Positions 185–255 (NVKDLTDIVS…IAARAMDMLD (71 aa)) are small ATPAse domain (RuvB-S). The tract at residues 258–336 (NEGFDFMDRK…HFGLQRPDER (79 aa)) is head domain (RuvB-H). The DNA site is built by R313 and R318.

The protein belongs to the RuvB family. In terms of assembly, homohexamer. Forms an RuvA(8)-RuvB(12)-Holliday junction (HJ) complex. HJ DNA is sandwiched between 2 RuvA tetramers; dsDNA enters through RuvA and exits via RuvB. An RuvB hexamer assembles on each DNA strand where it exits the tetramer. Each RuvB hexamer is contacted by two RuvA subunits (via domain III) on 2 adjacent RuvB subunits; this complex drives branch migration. In the full resolvosome a probable DNA-RuvA(4)-RuvB(12)-RuvC(2) complex forms which resolves the HJ.

It localises to the cytoplasm. The enzyme catalyses ATP + H2O = ADP + phosphate + H(+). In terms of biological role, the RuvA-RuvB-RuvC complex processes Holliday junction (HJ) DNA during genetic recombination and DNA repair, while the RuvA-RuvB complex plays an important role in the rescue of blocked DNA replication forks via replication fork reversal (RFR). RuvA specifically binds to HJ cruciform DNA, conferring on it an open structure. The RuvB hexamer acts as an ATP-dependent pump, pulling dsDNA into and through the RuvAB complex. RuvB forms 2 homohexamers on either side of HJ DNA bound by 1 or 2 RuvA tetramers; 4 subunits per hexamer contact DNA at a time. Coordinated motions by a converter formed by DNA-disengaged RuvB subunits stimulates ATP hydrolysis and nucleotide exchange. Immobilization of the converter enables RuvB to convert the ATP-contained energy into a lever motion, pulling 2 nucleotides of DNA out of the RuvA tetramer per ATP hydrolyzed, thus driving DNA branch migration. The RuvB motors rotate together with the DNA substrate, which together with the progressing nucleotide cycle form the mechanistic basis for DNA recombination by continuous HJ branch migration. Branch migration allows RuvC to scan DNA until it finds its consensus sequence, where it cleaves and resolves cruciform DNA. This is Holliday junction branch migration complex subunit RuvB from Aeromonas salmonicida (strain A449).